The chain runs to 487 residues: Serine/threonine-protein kinase 4 (487 aa).

At Met1 the chain carries N-acetylmethionine. Thr3 carries the post-translational modification Phosphothreonine. In terms of domain architecture, Protein kinase spans 30–281 (FDVLEKLGEG…ATQLLQHPFV (252 aa)). ATP-binding positions include 36-44 (LGEGSYGSV) and Lys59. Catalysis depends on Asp149, which acts as the Proton acceptor. Thr183 bears the Phosphothreonine; by autocatalysis mark. Phosphoserine is present on Ser265. A coiled-coil region spans residues 290–310 (LRDLINEAMDVKLKRQESQQR). Positions 303-312 (KRQESQQREV) are enriched in basic and acidic residues. A disordered region spans residues 303 to 332 (KRQESQQREVDQDDEENSEEDEMDSGTMVR). Residues 313–326 (DQDDEENSEEDEMD) are compositionally biased toward acidic residues. Ser320 carries the post-translational modification Phosphoserine. 2 positions are modified to phosphothreonine: Thr340 and Thr367. Position 387 is a phosphothreonine; by PKB/AKT1 (Thr387). Ser410 and Ser414 each carry phosphoserine. Tyr433 bears the Phosphotyrosine mark. The region spanning 433 to 480 (YEFLKSWTVEDLQKRLLALDPMMEQEIEEIRQKYQSKRQPILDAIEAK) is the SARAH domain.

It belongs to the protein kinase superfamily. STE Ser/Thr protein kinase family. STE20 subfamily. As to quaternary structure, homodimer; mediated via the coiled-coil region. Interacts with NORE1, which inhibits autoactivation. Interacts with and stabilizes SAV1. Interacts with RASSF1. Interacts with FOXO3. Interacts with RASSF2 (via SARAH domain). Interacts with AR, PKB/AKT1, TNNI3 and SIRT1. Interacts with DLG5 (via PDZ domain 3). Interacts with MARK3 and SCRIB in the presence of DLG5. Requires Mg(2+) as cofactor. In terms of processing, autophosphorylated on serine and threonine residues. Phosphorylation at Thr-387 by PKB/AKT1, leads to inhibition of its: kinase activity, nuclear translocation and autophosphorylation at Thr-183. It also diminishes its cleavage by caspases and its ability to phosphorylate FOXO3. Proteolytically cleaved by caspase-3 during apoptosis at Asp-326 and Asp-349 resulting in a 37 kDa or a 39 kDa subunit respectively. The 39 kDa subunit is further cleaved into the 37 kDa form. Proteolytic cleavage results in kinase activation and nuclear translocation of the truncated form (MST1/N). It is less likely that cleavage at Asp-349 is a prerequisite for activation as this site is not conserved in the murine ortholog.

The protein localises to the cytoplasm. Its subcellular location is the nucleus. The catalysed reaction is L-seryl-[protein] + ATP = O-phospho-L-seryl-[protein] + ADP + H(+). It catalyses the reaction L-threonyl-[protein] + ATP = O-phospho-L-threonyl-[protein] + ADP + H(+). With respect to regulation, inhibited by the C-terminal non-catalytic region. Activated by caspase-cleavage. Full activation also requires homodimerization and autophosphorylation of Thr-183. Activated by RASSF1 which acts by preventing its dephosphorylation. In terms of biological role, stress-activated, pro-apoptotic kinase which, following caspase-cleavage, enters the nucleus and induces chromatin condensation followed by internucleosomal DNA fragmentation. Key component of the Hippo signaling pathway which plays a pivotal role in organ size control and tumor suppression by restricting proliferation and promoting apoptosis. The core of this pathway is composed of a kinase cascade wherein STK3/MST2 and STK4/MST1, in complex with its regulatory protein SAV1, phosphorylates and activates LATS1/2 in complex with its regulatory protein MOB1, which in turn phosphorylates and inactivates YAP1 oncoprotein and WWTR1/TAZ. Phosphorylation of YAP1 by LATS2 inhibits its translocation into the nucleus to regulate cellular genes important for cell proliferation, cell death, and cell migration. STK3/MST2 and STK4/MST1 are required to repress proliferation of mature hepatocytes, to prevent activation of facultative adult liver stem cells (oval cells), and to inhibit tumor formation. Phosphorylates 'Ser-14' of histone H2B (H2BS14ph) during apoptosis. Phosphorylates FOXO3 upon oxidative stress, which results in its nuclear translocation and cell death initiation. Phosphorylates MOBKL1A, MOBKL1B and RASSF2. Phosphorylates TNNI3 (cardiac Tn-I) and alters its binding affinity to TNNC1 (cardiac Tn-C) and TNNT2 (cardiac Tn-T). Phosphorylates FOXO1 on 'Ser-212' and regulates its activation and stimulates transcription of PMAIP1 in a FOXO1-dependent manner. Phosphorylates SIRT1 and inhibits SIRT1-mediated p53/TP53 deacetylation, thereby promoting p53/TP53 dependent transcription and apoptosis upon DNA damage. Acts as an inhibitor of PKB/AKT1. Phosphorylates AR on 'Ser-650' and suppresses its activity by intersecting with PKB/AKT1 signaling and antagonizing formation of AR-chromatin complexes. The protein is Serine/threonine-protein kinase 4 (STK4) of Chlorocebus aethiops (Green monkey).